Here is a 51-residue protein sequence, read N- to C-terminus: MSSHKTFTIKRFLAKKQKQNRPIPQWIQMKPGSKIRYNSKRRHWRRTKLGL.

The protein belongs to the eukaryotic ribosomal protein eL39 family. As to quaternary structure, component of a male germ cell-specific 60S large ribosomal subunit (LSU), which contains RPL10L and RPL39L, instead of RPL10 and RPL39 paralogs. The composition of the rest of the complex is similar to classical ribosomes. As to expression, testis specific.

The protein resides in the cytoplasm. Its function is as follows. Male germ cell-specific component of the ribosome, which is required for the formation of sperm and male fertility. Replaces the RPL39 paralog in the ribosome of male germ cells. The ribosome is a large ribonucleoprotein complex responsible for the synthesis of proteins in the cell. The male germ cell-specific ribosome displays a ribosomal polypeptide exit tunnel of distinct size and charge states compared with the classical ribosome. It is responsible for regulating the biosynthesis and folding of a subset of male germ-cell-specific proteins that are essential for the formation of sperm. This Homo sapiens (Human) protein is Ribosomal protein eL39-like 2.